Here is a 160-residue protein sequence, read N- to C-terminus: Cyclic pyranopterin monophosphate synthase (160 aa).

Substrate contacts are provided by residues 75–77 and 113–114; these read LCH and ME. Asp128 is a catalytic residue.

This sequence belongs to the MoaC family. Homohexamer; trimer of dimers.

The catalysed reaction is (8S)-3',8-cyclo-7,8-dihydroguanosine 5'-triphosphate = cyclic pyranopterin phosphate + diphosphate. Its pathway is cofactor biosynthesis; molybdopterin biosynthesis. Catalyzes the conversion of (8S)-3',8-cyclo-7,8-dihydroguanosine 5'-triphosphate to cyclic pyranopterin monophosphate (cPMP). This Methylobacterium sp. (strain 4-46) protein is Cyclic pyranopterin monophosphate synthase.